The primary structure comprises 467 residues: UDP-N-acetylmuramate--L-alanine ligase (467 aa).

114–120 (GTHGKTT) serves as a coordination point for ATP.

It belongs to the MurCDEF family.

The protein resides in the cytoplasm. It carries out the reaction UDP-N-acetyl-alpha-D-muramate + L-alanine + ATP = UDP-N-acetyl-alpha-D-muramoyl-L-alanine + ADP + phosphate + H(+). Its pathway is cell wall biogenesis; peptidoglycan biosynthesis. Its function is as follows. Cell wall formation. The sequence is that of UDP-N-acetylmuramate--L-alanine ligase from Rhodopseudomonas palustris (strain BisA53).